Reading from the N-terminus, the 109-residue chain is MKFISTSLLLMLLVSSLSPVQGVLEVYYTSLRCRCVQESSVFIPRRFIDRIQILPRGNGCPRKEIIVWKKNKSIVCVDPQAEWIQRMMEVLRKRSSSTLPVPVFKRKIP.

An N-terminal signal peptide occupies residues 1–22 (MKFISTSLLLMLLVSSLSPVQG). 2 cysteine pairs are disulfide-bonded: C33–C60 and C35–C76.

The protein belongs to the intercrine alpha (chemokine CxC) family. Highest levels in liver, followed by spleen, lymph node, appendix and stomach. Low levels in salivary gland, mammary gland and fetal spleen.

Its subcellular location is the secreted. Functionally, chemotactic for B-lymphocytes but not for T-lymphocytes, monocytes and neutrophils. Does not induce calcium release in B-lymphocytes. Binds to BLR1/CXCR5. This Homo sapiens (Human) protein is C-X-C motif chemokine 13 (CXCL13).